The following is a 356-amino-acid chain: Butyrate kinase (356 aa).

This sequence belongs to the acetokinase family.

It is found in the cytoplasm. The enzyme catalyses butanoate + ATP = butanoyl phosphate + ADP. It participates in lipid metabolism; butanoate metabolism. Functionally, catalyzes the conversion of butyryl-CoA through butyryl phosphate to butyrate. The chain is Butyrate kinase (buk) from Clostridium perfringens (strain ATCC 13124 / DSM 756 / JCM 1290 / NCIMB 6125 / NCTC 8237 / Type A).